The chain runs to 1044 residues: Ribonucleoside-diphosphate reductase subunit alpha (1044 aa).

3 ATP-cone domains span residues 9-111 (YTIV…KAER), 118-217 (IAII…ARAR), and 235-325 (YVVQ…ETLG). Substrate is bound by residues Thr-440, 455-456 (SC), Gly-484, 668-672 (NLCTE), and 855-859 (PTATI). Residues Cys-456 and Cys-685 are joined by a disulfide bond. Asn-668 acts as the Proton acceptor in catalysis. Cys-670 serves as the catalytic Cysteine radical intermediate. Glu-672 acts as the Proton acceptor in catalysis.

Belongs to the ribonucleoside diphosphate reductase large chain family. In terms of assembly, tetramer of two alpha and two beta subunits.

It carries out the reaction a 2'-deoxyribonucleoside 5'-diphosphate + [thioredoxin]-disulfide + H2O = a ribonucleoside 5'-diphosphate + [thioredoxin]-dithiol. Under complex allosteric control mediated by deoxynucleoside triphosphates and ATP binding. The type of nucleotide bound at the specificity site determines substrate preference. It seems probable that ATP makes the enzyme reduce CDP and UDP, dGTP favors ADP reduction and dTTP favors GDP reduction. Provides the precursors necessary for DNA synthesis. Catalyzes the biosynthesis of deoxyribonucleotides from the corresponding ribonucleotides. This chain is Ribonucleoside-diphosphate reductase subunit alpha (nrdA), found in Chlamydia pneumoniae (Chlamydophila pneumoniae).